We begin with the raw amino-acid sequence, 374 residues long: P2Y purinoceptor 2 (374 aa).

Residues 1 to 32 (MAAGLDSWNSTINGTWEGDELGYKCRFNEDFK) lie on the Extracellular side of the membrane. 2 N-linked (GlcNAc...) asparagine glycosylation sites follow: asparagine 9 and asparagine 13. Residues 33 to 59 (YVLLPVSYGVVCVLGLCLNVVALYIFL) traverse the membrane as a helical segment. Topologically, residues 60–70 (CRLKTWNASTT) are cytoplasmic. Residues 71–93 (YMFHLAVSDSLYAASLPLLVYYY) traverse the membrane as a helical segment. Over 94-110 (AQGDHWPFSTVLCKLVR) the chain is Extracellular. Cysteine 106 and cysteine 183 are oxidised to a cystine. A helical transmembrane segment spans residues 111 to 129 (FLFYTNLYCSILFLTCISV). Residues 130–152 (HRCLGVLRPLHSLSWGHARYARR) lie on the Cytoplasmic side of the membrane. The helical transmembrane segment at 153 to 172 (VAAVVWVLVLACQAPVLYFV) threads the bilayer. At 173–194 (TTSVRGTRITCHDTSARELFSH) the chain is on the extracellular side. Residues 195–220 (FVAYSSVMLGLLFAVPFSIILVCYVL) form a helical membrane-spanning segment. At 221-245 (MARRLLKPAYGTTGLPRAKRKSVRT) the chain is on the cytoplasmic side. Residues 246–268 (IALVLAVFALCFLPFHVTRTLYY) form a helical membrane-spanning segment. Residues 269 to 286 (SFRSLDLSCHTLNAINMA) lie on the Extracellular side of the membrane. Residues 287–308 (YKITRPLASANSCLDPVLYFLA) traverse the membrane as a helical segment. At 309–374 (GQRLVRFARD…AGSETKDIRL (66 aa)) the chain is on the cytoplasmic side. The interval 318 to 374 (DAKPATEPTPSPQARRKLGLHRPNRTDTVRKDLSISSDDSRRTESTPAGSETKDIRL) is disordered. Over residues 331–340 (ARRKLGLHRP) the composition is skewed to basic residues. The segment covering 341–361 (NRTDTVRKDLSISSDDSRRTE) has biased composition (basic and acidic residues).

Belongs to the G-protein coupled receptor 1 family.

It is found in the cell membrane. Its function is as follows. Receptor for ATP and UTP coupled to G-proteins that activate a phosphatidylinositol-calcium second messenger system. The affinity range is UTP = ATP &gt; ATP-gamma-S &gt;&gt; 2-methylthio-ATP = ADP. The chain is P2Y purinoceptor 2 (P2ry2) from Rattus norvegicus (Rat).